The sequence spans 579 residues: Folliculin (579 aa).

The interval 32-52 is disordered; it reads GASCGDSIGQGEQAEDEEMGI. The 157-residue stretch at 86–242 folds into the uDENN FLCN/SMCR8-type domain; that stretch reads RSLAAGHPGY…RNGNAARSLT (157 aa). A cDENN FLCN/SMCR8-type domain is found at 337–491; that stretch reads NMVQRRMGVF…ILNKIEAALS (155 aa). The dDENN FLCN/SMCR8-type domain occupies 493–558; sequence ENLSMDVVDQ…LLKFWMTGLS (66 aa).

This sequence belongs to the folliculin family. Component of the lysosomal folliculin complex (LFC).

The protein resides in the lysosome membrane. It is found in the cytoplasm. It localises to the cytosol. Its subcellular location is the cell projection. The protein localises to the cilium. The protein resides in the cytoskeleton. It is found in the microtubule organizing center. It localises to the centrosome. Its subcellular location is the spindle. The protein localises to the nucleus. With respect to regulation, GTPase-activating activity is inhibited in the folliculin complex (LFC), which stabilizes the GDP-bound state of RagA/RRAGA (or RagB/RRAGB), because Arg-164 is located far from the RagC/RRAGC or RagD/RRAGD nucleotide pocket. Disassembly of the LFC complex upon amino acid restimulation liberates the GTPase-activating activity. Multi-functional protein, involved in both the cellular response to amino acid availability and in the regulation of glycolysis. GTPase-activating protein that plays a key role in the cellular response to amino acid availability through regulation of the non-canonical mTORC1 signaling cascade controlling the MiT/TFE factors tfeb and tfe3. Activates mTORC1 by acting as a GTPase-activating protein: specifically stimulates GTP hydrolysis by RagC/RRAGC or RagD/RRAGD, promoting the conversion to the GDP-bound state of RagC/RRAGC or RagD/RRAGD, and thereby activating the kinase activity of mTORC1. The GTPase-activating activity is inhibited during starvation and activated in presence of nutrients. Acts as a key component for non-canonical mTORC1-dependent control of the MiT/TFE factors tfeb and tfe3, while it is not involved in mTORC1-dependent phosphorylation of canonical RPS6KB1/S6K1 and EIF4EBP1/4E-BP1. In low-amino acid conditions, the lysosomal folliculin complex (LFC) is formed on the membrane of lysosomes, which inhibits the GTPase-activating activity of flcn, inactivates mTORC1 and maximizes nuclear translocation of tfeb and tfe3. Upon amino acid restimulation, RagA/RRAGA (or RagB/RRAGB) nucleotide exchange promotes disassembly of the LFC complex and liberates the GTPase-activating activity of flcn, leading to activation of mTORC1 and subsequent cytoplasmic retention of tfeb and tfe3. Required for the exit of hematopoietic stem cell from pluripotency by promoting mTOR-dependent cytoplasmic retention of tfe3, thereby increasing Wnt signaling. Acts as an inhibitor of browning of adipose tissue by regulating mTOR-dependent cytoplasmic retention of tfe3. In response to flow stress, regulates STK11/LKB1 accumulation and mTORC1 activation through primary cilia. Required for starvation-induced perinuclear clustering of lysosomes by promoting association of rilp with its effector rab34. Involved in the control of embryonic stem cells differentiation; together with lamtor1 it is necessary to recruit and activate RagC/RRAGC and RagD/RRAGD at the lysosomes, and to induce exit of embryonic stem cells from pluripotency via non-canonical, mTOR-independent tfe3 inactivation. Regulates glycolysis by binding to lactate dehydrogenase ldha, acting as an uncompetitive inhibitor. The polypeptide is Folliculin (Xenopus tropicalis (Western clawed frog)).